The sequence spans 442 residues: HTH-type transcriptional regulator NorG (442 aa).

Residues 2-46 (KIPSHRQLAIQYNVNRVTIIKSIELLEAEGFIYTKVGSGTYVNDY) enclose the HTH gntR-type domain. Residues 6–25 (HRQLAIQYNVNRVTIIKSIE) constitute a DNA-binding region (H-T-H motif). Position 288 is an N6-(pyridoxal phosphate)lysine (K288).

The protein in the C-terminal section; belongs to the class-I pyridoxal-phosphate-dependent aminotransferase family. It depends on pyridoxal 5'-phosphate as a cofactor.

Its function is as follows. Positively regulates the expression of the NorB efflux pump and negatively regulates the expression of the AbcA efflux pump. Binds specifically to the promoters of norA, norB and norC and abcA genes. Could also have an aminotransferase activity. The sequence is that of HTH-type transcriptional regulator NorG (norG) from Staphylococcus aureus (strain USA300).